The primary structure comprises 377 residues: Aquaporin-2 (377 aa).

At 1-14 the chain is on the cytoplasmic side; the sequence is MAANKGINGGIKNH. A helical membrane pass occupies residues 15-35; it reads FIAFLGEFVGTFLFLFFAYGG. Over 36–56 the chain is Extracellular; sequence TQTANQTSQKNPSIVASPDIN. The N-linked (GlcNAc...) asparagine glycan is linked to asparagine 40. Residues 57–77 form a helical membrane-spanning segment; the sequence is QLLYIALIFGFSLTVNVWIFF. Topologically, residues 78–87 are cytoplasmic; sequence RVSGGLFNPA. An NPA 1 motif is present at residues 85–87; sequence NPA. A helical membrane pass occupies residues 88–108; it reads VTIALCLVGVVGPVRSIFIFI. Over 109–144 the chain is Extracellular; it reads AQVVASIAAAAAVRGLLPGDTVLFSCALAPGTSIAQ. Residues 145–165 form a helical membrane-spanning segment; sequence GLFLEMFFTIELVFTILMLAA. At 166–171 the chain is on the cytoplasmic side; that stretch reads EKTKVT. The chain crosses the membrane as a helical span at residues 172 to 192; that stretch reads FVAPVGIGLSLFVAELMGVAW. The Extracellular portion of the chain corresponds to 193–215; sequence TGGALNPARAFGAEVIGGFRGYH. The NPA 2 signature appears at 198–200; sequence NPA. A helical membrane pass occupies residues 216–236; that stretch reads WIYWLGPLMGAVLAAGFYKVI. Residues 237–377 lie on the Cytoplasmic side of the membrane; sequence KFLNYEQVNG…ANAQNRAKTP (141 aa). Disordered stretches follow at residues 278 to 332 and 358 to 377; these read LFQT…RENE and RLSG…AKTP. 2 stretches are compositionally biased toward polar residues: residues 315-328 and 368-377; these read PAQQ…ASTI and ANAQNRAKTP.

This sequence belongs to the MIP/aquaporin (TC 1.A.8) family.

The protein localises to the membrane. It catalyses the reaction H2O(in) = H2O(out). The enzyme catalyses glycerol(in) = glycerol(out). In terms of biological role, water channel required to facilitate the transport of water across membranes. Involved in conidiation. This is Aquaporin-2 from Botryotinia fuckeliana (strain B05.10) (Noble rot fungus).